Here is a 1252-residue protein sequence, read N- to C-terminus: Immunoglobulin superfamily DCC subclass member 4 (1252 aa).

The signal sequence occupies residues 1 to 22; it reads MARADTGRGLLVLTFCLLSARG. Over 23-956 the chain is Extracellular; the sequence is ELPLPQETTV…SDSLDVHAVT (934 aa). Ig-like domains lie at 27–136, 142–228, 241–329, and 334–420; these read PQET…VAVV, EDFS…ASLT, QDVV…AELR, and PAIS…APLA. Disulfide bonds link Cys55–Cys120 and Cys163–Cys211. The N-linked (GlcNAc...) asparagine glycan is linked to Asn88. Asn251 carries N-linked (GlcNAc...) asparagine glycosylation. Cystine bridges form between Cys264–Cys311 and Cys355–Cys404. Fibronectin type-III domains follow at residues 430–524, 526–622, 631–742, 751–844, and 849–944; these read APTR…TLDD, PSAA…TPGV, APAE…TPDL, PPAH…TLPD, and PPSD…TLQK. The tract at residues 669 to 688 is disordered; the sequence is TEEEADGDRPPGGRGDQAWD. Residues 957-977 traverse the membrane as a helical segment; that stretch reads GIIVGVCLGLLCLLACMCAGL. Topologically, residues 978–1252 are cytoplasmic; sequence RRSSHREALP…RAPVSSAQVP (275 aa). Thr994 is subject to Phosphothreonine.

It belongs to the immunoglobulin superfamily. DCC family. In terms of tissue distribution, expressed in skeletal muscle, heart and brain. Brain expression is hippocampus-specific.

It is found in the cell membrane. The chain is Immunoglobulin superfamily DCC subclass member 4 (Igdcc4) from Mus musculus (Mouse).